Consider the following 338-residue polypeptide: 1-aminocyclopropane-1-carboxylate deaminase (338 aa).

The residue at position 51 (Lys-51) is an N6-(pyridoxal phosphate)lysine. Ser-78 serves as the catalytic Nucleophile.

The protein belongs to the ACC deaminase/D-cysteine desulfhydrase family. Requires pyridoxal 5'-phosphate as cofactor.

The catalysed reaction is 1-aminocyclopropane-1-carboxylate + H2O = 2-oxobutanoate + NH4(+). Functionally, catalyzes a cyclopropane ring-opening reaction, the irreversible conversion of 1-aminocyclopropane-1-carboxylate (ACC) to ammonia and alpha-ketobutyrate. Allows growth on ACC as a nitrogen source. The protein is 1-aminocyclopropane-1-carboxylate deaminase of Enterobacter cloacae.